We begin with the raw amino-acid sequence, 752 residues long: Iron-sulfur clusters transporter ABCB7, mitochondrial (752 aa).

The transit peptide at 1–22 (MALLAIHSWRWAAAAVAFEKHK) directs the protein to the mitochondrion. Residues 23 to 140 (HSAVLTRSLV…KDRPDLRARV (118 aa)) lie on the Mitochondrial matrix side of the membrane. One can recognise an ABC transmembrane type-1 domain in the interval 140 to 436 (VAISLGFLGG…LGTVYRETRQ (297 aa)). Residues 141-161 (AISLGFLGGAKAMNIVVPFMF) traverse the membrane as a helical segment. The Mitochondrial intermembrane segment spans residues 162-185 (KYAVDSLNQMSGNMLNLSDAPNTV). The chain crosses the membrane as a helical span at residues 186-206 (ATMATAVLIGYGVSRAGAAFF). Residues 207 to 259 (NEVRNAVFGKVAQNSIRRIAKNVFLHLHNLDLGFHLSRQTGALSKAIDRGTRG) are Mitochondrial matrix-facing. N6-acetyllysine occurs at positions 216 and 251. A helical transmembrane segment spans residues 260–280 (ISFVLSALVFNLLPIVFEMTL). Over 281–290 (VSSVLYYKCG) the chain is Mitochondrial intermembrane. The helical transmembrane segment at 291–311 (AQFALVTLGTLGAYTAFTVAV) threads the bilayer. Over 312–382 (TRWRTRFRIE…TLAMLNFGQS (71 aa)) the chain is Mitochondrial matrix. 315 to 319 (RTRFR) is a binding site for glutathione. A Phosphoserine modification is found at Ser336. Tyr340 is subject to Phosphotyrosine. Thr342 bears the Phosphothreonine mark. Lys350 is modified (N6-acetyllysine). A glutathione-binding site is contributed by 378 to 381 (NFGQ). The helical transmembrane segment at 383-403 (AIFSVGLTAIMVLASQGIVAG) threads the bilayer. The Mitochondrial intermembrane portion of the chain corresponds to 404-409 (ALTVGD). A helical transmembrane segment spans residues 410–430 (LVMVNGLLFQLSLPLNFLGTV). Residue Gly428 coordinates glutathione. Residues 431–752 (YRETRQALID…SVKGCGNCSC (322 aa)) lie on the Mitochondrial matrix side of the membrane. The 235-residue stretch at 472 to 706 (VAFDNVHFEY…SSSIYSEMWH (235 aa)) folds into the ABC transporter domain. ATP-binding positions include Tyr481 and 505–516 (GGSGSGKSTIVR).

The protein belongs to the ABC transporter superfamily. ABCB family. Heavy Metal importer (TC 3.A.1.210) subfamily. In terms of assembly, homodimer or heterodimer. Interacts with C10orf88/PAAT. Forms a complex with ABCB10 and FECH, where a dimeric FECH bridges ABCB7 and ABCB10 homodimers; this complex may be required for cellular iron homeostasis, mitochondrial function and heme biosynthesis. Interacts with FECH. Interacts with ATP5F1A. Interacts with COX4I1; this interaction allows the regulation of cellular iron homeostasis and cellular reactive oxygen species (ROS) levels in cardiomyocytes.

The protein resides in the mitochondrion inner membrane. The catalysed reaction is (glutathione)4[2Fe(III)-2S] cluster(in) + ATP + H2O = (glutathione)4[2Fe(III)-2S] cluster(out) + ADP + phosphate + H(+). Its function is as follows. Exports glutathione-coordinated iron-sulfur clusters such as [2Fe-2S]-(GS)4 cluster from the mitochondria to the cytosol in an ATP-dependent manner allowing the assembly of the cytosolic iron-sulfur (Fe/S) cluster-containing proteins and participates in iron homeostasis. Moreover, through a functional complex formed of ABCB7, FECH and ABCB10, also plays a role in the cellular iron homeostasis, mitochondrial function and heme biosynthesis. In cardiomyocytes, regulates cellular iron homeostasis and cellular reactive oxygen species (ROS) levels through its interaction with COX4I1. May also play a role in hematopoiesis. The protein is Iron-sulfur clusters transporter ABCB7, mitochondrial of Rattus norvegicus (Rat).